The following is a 233-amino-acid chain: Small ribosomal subunit protein uS3 (233 aa).

The 69-residue stretch at 39 to 107 folds into the KH type-2 domain; that stretch reads VRTFLTKELK…PAQINISEVR (69 aa).

Belongs to the universal ribosomal protein uS3 family. Part of the 30S ribosomal subunit. Forms a tight complex with proteins S10 and S14.

Binds the lower part of the 30S subunit head. Binds mRNA in the 70S ribosome, positioning it for translation. The protein is Small ribosomal subunit protein uS3 of Pseudoalteromonas translucida (strain TAC 125).